A 344-amino-acid polypeptide reads, in one-letter code: Lipase chaperone (344 aa).

A helical transmembrane segment spans residues 14–34 (AVVYGVVGLAAIAGVAMWSGA). The disordered stretch occupies residues 39-78 (ATGASGESPEASVAGGSVTAPPQAAVPASTGLPPSLAGSS).

It belongs to the lipase chaperone family.

It is found in the cell inner membrane. May be involved in the folding of the extracellular lipase during its passage through the periplasm. The chain is Lipase chaperone (lifO) from Pseudomonas sp. (strain KWI-56).